A 96-amino-acid chain; its full sequence is Cytochrome c-553 (96 aa).

Residues 1-19 (MKKVIVALGVLAFANVLMA) form the signal peptide. Residues Cys29, Cys32, His33, and Met73 each coordinate heme c.

The protein belongs to the cytochrome c family. In terms of processing, binds 1 heme c group covalently per subunit.

The protein resides in the periplasm. Its function is as follows. Natural electron acceptor for a formate dehydrogenase. The polypeptide is Cytochrome c-553 (Helicobacter pylori (strain J99 / ATCC 700824) (Campylobacter pylori J99)).